We begin with the raw amino-acid sequence, 277 residues long: Formamidopyrimidine-DNA glycosylase (277 aa).

The active-site Schiff-base intermediate with DNA is the proline 2. Glutamate 3 (proton donor) is an active-site residue. The Proton donor; for beta-elimination activity role is filled by lysine 58. DNA-binding residues include histidine 94, arginine 113, and arginine 156. Residues leucine 241 to lysine 277 form an FPG-type zinc finger. Arginine 267 (proton donor; for delta-elimination activity) is an active-site residue.

This sequence belongs to the FPG family. In terms of assembly, monomer. Requires Zn(2+) as cofactor.

The catalysed reaction is Hydrolysis of DNA containing ring-opened 7-methylguanine residues, releasing 2,6-diamino-4-hydroxy-5-(N-methyl)formamidopyrimidine.. It catalyses the reaction 2'-deoxyribonucleotide-(2'-deoxyribose 5'-phosphate)-2'-deoxyribonucleotide-DNA = a 3'-end 2'-deoxyribonucleotide-(2,3-dehydro-2,3-deoxyribose 5'-phosphate)-DNA + a 5'-end 5'-phospho-2'-deoxyribonucleoside-DNA + H(+). Functionally, involved in base excision repair of DNA damaged by oxidation or by mutagenic agents. Acts as a DNA glycosylase that recognizes and removes damaged bases. Has a preference for oxidized purines, such as 7,8-dihydro-8-oxoguanine (8-oxoG). Has AP (apurinic/apyrimidinic) lyase activity and introduces nicks in the DNA strand. Cleaves the DNA backbone by beta-delta elimination to generate a single-strand break at the site of the removed base with both 3'- and 5'-phosphates. The chain is Formamidopyrimidine-DNA glycosylase from Gluconobacter oxydans (strain 621H) (Gluconobacter suboxydans).